We begin with the raw amino-acid sequence, 132 residues long: Small ribosomal subunit protein uS8 (132 aa).

This sequence belongs to the universal ribosomal protein uS8 family. Part of the 30S ribosomal subunit. Contacts proteins S5 and S12.

One of the primary rRNA binding proteins, it binds directly to 16S rRNA central domain where it helps coordinate assembly of the platform of the 30S subunit. This chain is Small ribosomal subunit protein uS8, found in Streptococcus equi subsp. equi (strain 4047).